The chain runs to 63 residues: Large ribosomal subunit protein uL29 (63 aa).

It belongs to the universal ribosomal protein uL29 family.

The polypeptide is Large ribosomal subunit protein uL29 (Christiangramia forsetii (strain DSM 17595 / CGMCC 1.15422 / KT0803) (Gramella forsetii)).